A 660-amino-acid chain; its full sequence is Bifunctional polymyxin resistance protein ArnA (660 aa).

A formyltransferase ArnAFT region spans residues 1–304 (MKTVVFAYHD…TLGLVQGSRL (304 aa)). 86 to 88 (HLI) is a (6R)-10-formyltetrahydrofolate binding site. H104 functions as the Proton donor; for formyltransferase activity in the catalytic mechanism. Residues R114 and 136–140 (VKRAD) contribute to the (6R)-10-formyltetrahydrofolate site. Positions 314 to 660 (RRTRVLILGV…RTVDLTDKPS (347 aa)) are dehydrogenase ArnADH. NAD(+)-binding positions include D347 and 368 to 369 (DI). Residues A393, Y398, and 432–433 (TS) contribute to the UDP-alpha-D-glucuronate site. The active-site Proton acceptor; for decarboxylase activity is E434. UDP-alpha-D-glucuronate is bound by residues R460, N492, 526–535 (KLIDGGKQKR), and Y613. Catalysis depends on R619, which acts as the Proton donor; for decarboxylase activity.

In the N-terminal section; belongs to the Fmt family. UDP-L-Ara4N formyltransferase subfamily. The protein in the C-terminal section; belongs to the NAD(P)-dependent epimerase/dehydratase family. UDP-glucuronic acid decarboxylase subfamily. In terms of assembly, homohexamer, formed by a dimer of trimers.

The enzyme catalyses UDP-alpha-D-glucuronate + NAD(+) = UDP-beta-L-threo-pentopyranos-4-ulose + CO2 + NADH. It carries out the reaction UDP-4-amino-4-deoxy-beta-L-arabinose + (6R)-10-formyltetrahydrofolate = UDP-4-deoxy-4-formamido-beta-L-arabinose + (6S)-5,6,7,8-tetrahydrofolate + H(+). It functions in the pathway nucleotide-sugar biosynthesis; UDP-4-deoxy-4-formamido-beta-L-arabinose biosynthesis; UDP-4-deoxy-4-formamido-beta-L-arabinose from UDP-alpha-D-glucuronate: step 1/3. It participates in nucleotide-sugar biosynthesis; UDP-4-deoxy-4-formamido-beta-L-arabinose biosynthesis; UDP-4-deoxy-4-formamido-beta-L-arabinose from UDP-alpha-D-glucuronate: step 3/3. The protein operates within bacterial outer membrane biogenesis; lipopolysaccharide biosynthesis. Bifunctional enzyme that catalyzes the oxidative decarboxylation of UDP-glucuronic acid (UDP-GlcUA) to UDP-4-keto-arabinose (UDP-Ara4O) and the addition of a formyl group to UDP-4-amino-4-deoxy-L-arabinose (UDP-L-Ara4N) to form UDP-L-4-formamido-arabinose (UDP-L-Ara4FN). The modified arabinose is attached to lipid A and is required for resistance to polymyxin and cationic antimicrobial peptides. The polypeptide is Bifunctional polymyxin resistance protein ArnA (Escherichia coli O17:K52:H18 (strain UMN026 / ExPEC)).